The following is a 276-amino-acid chain: Mitochondrial outer membrane protein porin 6 (276 aa).

It belongs to the eukaryotic mitochondrial porin (TC 1.B.8.1) family.

The protein localises to the mitochondrion outer membrane. Functionally, forms a channel through the mitochondrial outer membrane that allows diffusion of small hydrophilic molecules. The channel adopts an open conformation at low or zero membrane potential and a closed conformation at potentials above 30-40 mV. The open state has a weak anion selectivity whereas the closed state is cation-selective. This Oryza sativa subsp. japonica (Rice) protein is Mitochondrial outer membrane protein porin 6 (VDAC6).